We begin with the raw amino-acid sequence, 399 residues long: Serine/threonine transporter SstT (399 aa).

Helical transmembrane passes span 8 to 28, 37 to 57, 77 to 97, 134 to 154, 178 to 198, 212 to 232, 284 to 304, 312 to 332, and 348 to 370; these read LSLVTKIFIAIILGFVVAFLF, IFGEIFIKALKAVAPILVFVL, ILFLYIVSMLFAAFSAVIADL, PVVALSEANFIGILAWAIILG, VIHLVISFAPIGIFGLVAVTF, LLLVLLGTMFFMALIVNPIMV, VIIPLGSTVNMCGAAITITVL, LGISVDIWTMLILCVVASISA, and VACSLFGISSDIAMQVVAIGMVI.

This sequence belongs to the dicarboxylate/amino acid:cation symporter (DAACS) (TC 2.A.23) family.

The protein resides in the cell inner membrane. The catalysed reaction is L-serine(in) + Na(+)(in) = L-serine(out) + Na(+)(out). The enzyme catalyses L-threonine(in) + Na(+)(in) = L-threonine(out) + Na(+)(out). Involved in the import of serine and threonine into the cell, with the concomitant import of sodium (symport system). The protein is Serine/threonine transporter SstT of Acinetobacter baylyi (strain ATCC 33305 / BD413 / ADP1).